The chain runs to 162 residues: Regulator of sigma D (162 aa).

It belongs to the Rsd/AlgQ family. As to quaternary structure, interacts with RpoD.

The protein localises to the cytoplasm. Functionally, binds RpoD and negatively regulates RpoD-mediated transcription activation by preventing the interaction between the primary sigma factor RpoD with the catalytic core of the RNA polymerase and with promoter DNA. May be involved in replacement of the RNA polymerase sigma subunit from RpoD to RpoS during the transition from exponential growth to the stationary phase. In Salmonella typhi, this protein is Regulator of sigma D.